We begin with the raw amino-acid sequence, 452 residues long: Probable phosphoglucosamine mutase (452 aa).

Serine 101 (phosphoserine intermediate) is an active-site residue. Positions 101, 242, 244, and 246 each coordinate Mg(2+). At serine 101 the chain carries Phosphoserine.

It belongs to the phosphohexose mutase family. The cofactor is Mg(2+). In terms of processing, activated by phosphorylation.

It carries out the reaction alpha-D-glucosamine 1-phosphate = D-glucosamine 6-phosphate. Catalyzes the conversion of glucosamine-6-phosphate to glucosamine-1-phosphate. The polypeptide is Probable phosphoglucosamine mutase (Methanosphaera stadtmanae (strain ATCC 43021 / DSM 3091 / JCM 11832 / MCB-3)).